The primary structure comprises 346 residues: 4-hydroxy-2-oxohexanoate aldolase (346 aa).

The Pyruvate carboxyltransferase domain maps to 7–259 (VRITDTSLRD…KTGIDFFDIA (253 aa)). Substrate is bound at residue 15–16 (RD). A Mn(2+)-binding site is contributed by D16. H19 functions as the Proton acceptor in the catalytic mechanism. Substrate is bound by residues S169 and H198. Residues H198 and H200 each contribute to the Mn(2+) site. Y289 contacts substrate.

The protein belongs to the 4-hydroxy-2-oxovalerate aldolase family. As to quaternary structure, homodimer. Forms a heterotetramer composed of two aldolase (HsaF) and two dehydrogenase (HsaG) subunits. The cofactor is Mn(2+).

The catalysed reaction is (S)-4-hydroxy-2-oxohexanoate = propanal + pyruvate. It carries out the reaction (S)-4-hydroxy-2-oxopentanoate = acetaldehyde + pyruvate. Functionally, involved in cholesterol degradation. Catalyzes the retro-aldol cleavage of 4-hydroxy-2-oxohexanoate (HOHA) to pyruvate and propanal. Can also catalyze the cleavage of 4-hydroxy-2-oxopentanoate (HOPA) to pyruvate and acetaldehyde. The aldehydes produced by this reaction are directly channeled to the dehydrogenase HsaG. This Mycobacterium bovis (strain ATCC BAA-935 / AF2122/97) protein is 4-hydroxy-2-oxohexanoate aldolase.